Reading from the N-terminus, the 384-residue chain is MQSFLPFSRPAIGSEEINAVANVLGSGWITTGPQNHQLETDFCQIFGCKHAIAVCSATAGMHITLLALGIGPGDEVITPSQTWVSTINMIVLLGAEPVMVDVDRDTLMVNAAAIEAAITPNTKAIIPVHYAGAPCDLDALRQISQRHGIPLIEDAAHAVGTRYRDQWIGEQGTAIFSFHAIKNITCAEGGLVATDDDELAARVRRLKFHGLGVDAFDRQIQGRSPQAEVVEPGYKYNLSDIHAAIAVVQLRRLPEINARRQALVASYHKALAHLPLQPLALPHYSHQHAWHLFMVRVDEERCGISRDQLMACLKDMGIGSGLHFRAVHSQKYYRERYPHLCLPNTEWNSARLCTLPLFPDMLDSDIERVANALTTIIGSHRVTK.

N6-(pyridoxal phosphate)lysine is present on Lys182.

Belongs to the DegT/DnrJ/EryC1 family. ArnB subfamily. As to quaternary structure, homodimer. The cofactor is pyridoxal 5'-phosphate.

It carries out the reaction UDP-4-amino-4-deoxy-beta-L-arabinose + 2-oxoglutarate = UDP-beta-L-threo-pentopyranos-4-ulose + L-glutamate. The protein operates within nucleotide-sugar biosynthesis; UDP-4-deoxy-4-formamido-beta-L-arabinose biosynthesis; UDP-4-deoxy-4-formamido-beta-L-arabinose from UDP-alpha-D-glucuronate: step 2/3. Its pathway is bacterial outer membrane biogenesis; lipopolysaccharide biosynthesis. In terms of biological role, catalyzes the conversion of UDP-4-keto-arabinose (UDP-Ara4O) to UDP-4-amino-4-deoxy-L-arabinose (UDP-L-Ara4N). The modified arabinose is attached to lipid A and is required for resistance to polymyxin and cationic antimicrobial peptides. The polypeptide is UDP-4-amino-4-deoxy-L-arabinose--oxoglutarate aminotransferase (Yersinia pseudotuberculosis serotype O:1b (strain IP 31758)).